The primary structure comprises 365 residues: Chorismate synthase (365 aa).

Positions 41–60 (MQHDLDRRRPGTSRYTTARR) are disordered. NADP(+) is bound by residues Arg-48 and Arg-54. FMN-binding positions include 125–127 (RSS), 238–239 (NA), Gly-278, 293–297 (KPTSS), and Arg-319.

This sequence belongs to the chorismate synthase family. As to quaternary structure, homotetramer. FMNH2 serves as cofactor.

It carries out the reaction 5-O-(1-carboxyvinyl)-3-phosphoshikimate = chorismate + phosphate. Its pathway is metabolic intermediate biosynthesis; chorismate biosynthesis; chorismate from D-erythrose 4-phosphate and phosphoenolpyruvate: step 7/7. Functionally, catalyzes the anti-1,4-elimination of the C-3 phosphate and the C-6 proR hydrogen from 5-enolpyruvylshikimate-3-phosphate (EPSP) to yield chorismate, which is the branch point compound that serves as the starting substrate for the three terminal pathways of aromatic amino acid biosynthesis. This reaction introduces a second double bond into the aromatic ring system. The protein is Chorismate synthase of Shewanella amazonensis (strain ATCC BAA-1098 / SB2B).